Here is a 1481-residue protein sequence, read N- to C-terminus: Cystic fibrosis transmembrane conductance regulator (1481 aa).

Residues 1-77 (MQRSPLEKAS…KLINALRRCF (77 aa)) lie on the Cytoplasmic side of the membrane. A helical transmembrane segment spans residues 78 to 98 (FWRFMFYGILLYLGEVTKAVQ). The region spanning 81–365 (FMFYGILLYL…WAVQTWYDSL (285 aa)) is the ABC transmembrane type-1 1 domain. The Extracellular segment spans residues 99–122 (PLLLGRIIASYDPDNKEERSIAIY). The chain crosses the membrane as a helical span at residues 123-146 (LGIGLCLLFIVRTLLLHPAIFGLH). Over 147 to 195 (HIGMQMRIAMFSLIYKKTLKLSSRVLDKISIGQLVSLLSNNLNKFDEGL) the chain is Cytoplasmic. A helical transmembrane segment spans residues 196–216 (ALAHFVWIVPLQVALLMGLIW). The Extracellular portion of the chain corresponds to 217 to 222 (ELLQAS). The chain crosses the membrane as a helical span at residues 223–243 (AFCGLGFLIVLALFQAGLGRM). Residues 244–298 (MMKYRDQRAGKINERLVITSEMIENIQSVKAYCWEEAMEKMIENLRQTELKLTRK) lie on the Cytoplasmic side of the membrane. A helical transmembrane segment spans residues 299 to 319 (AAYVRYFNSSAFFFSGFFVVF). At 320-339 (LSVLPYALIKGIVLRKIFTT) the chain is on the extracellular side. Residues 340 to 358 (ISFCIVLRMAVTRQFPWAV) traverse the membrane as a helical segment. Over 359-858 (QTWYDSLGAI…YLRYITVHKS (500 aa)) the chain is Cytoplasmic. Residues W401, S434, 458–465 (GSTGAGKT), and Q493 contribute to the ATP site. The ABC transporter 1 domain occupies 423–646 (NDDDSLFFSN…RPDFSSKLMG (224 aa)). C524 is lipidated: S-palmitoyl cysteine. S549 and S660 each carry phosphoserine. The disordered R region stretch occupies residues 654-831 (SAERRNSILT…EEINEEDLKE (178 aa)). S670 bears the Phosphoserine; by PKA mark. Phosphoserine is present on S686. A Glycyl lysine isopeptide (Lys-Gly) (interchain with G-Cter in ubiquitin) cross-link involves residue K688. Phosphoserine occurs at positions 700 and 712. At T717 the chain carries Phosphothreonine. Residues S737, S753, S768, S790, S795, and S813 each carry the phosphoserine modification. A helical membrane pass occupies residues 859 to 879 (LIFVLIWCLVIFLAEVAASLV). The region spanning 859-1155 (LIFVLIWCLV…AVNSSIDVDS (297 aa)) is the ABC transmembrane type-1 2 domain. The Extracellular segment spans residues 880–918 (VLWFLGNTPPQDKGNSTYSRNNSYAVIITRTSSYYVFYI). 2 N-linked (GlcNAc...) asparagine glycosylation sites follow: N894 and N900. The chain crosses the membrane as a discontinuously helical span at residues 919-939 (YVGVADTLLAMGFFRGLPLVH). The Cytoplasmic segment spans residues 940-990 (TLITVSKILHHKMLHSVLQAPMSTLNTLKAGGILNRFSKDIAILDDLLPLT). A helical membrane pass occupies residues 991–1011 (IFDFIQLLLIVIGAIAVVAVL). The Extracellular portion of the chain corresponds to 1012-1013 (QP). A helical membrane pass occupies residues 1014–1034 (YIFVATVPVIVAFIMLRAYFL). Residues 1035–1095 (QTSQQLKQLE…TANWFLYLST (61 aa)) are Cytoplasmic-facing. A helical membrane pass occupies residues 1096–1116 (LRWFQMRIEMIFVIFFIAVTF). Residues 1117-1130 (ISILTTGEGEGTVG) are Extracellular-facing. Residues 1131-1151 (IILTLAMNIMSTLQWAVNSSI) form a helical membrane-spanning segment. Residues 1152–1481 (DVDSLMRSVS…TEEEVQDTRL (330 aa)) are Cytoplasmic-facing. One can recognise an ABC transporter 2 domain in the interval 1211-1444 (MTVKDLTAKY…RSLFRQAISP (234 aa)). ATP is bound by residues Y1220 and 1245-1252 (GRTGSGKS). Residues 1387-1481 (RTLKQAFADC…TEEEVQDTRL (95 aa)) are interaction with GORASP2. C1396 is lipidated: S-palmitoyl cysteine. 2 positions are modified to phosphoserine: S1445 and S1457. The segment at 1462-1481 (QPQIAALKEETEEEVQDTRL) is disordered. Acidic residues predominate over residues 1471-1481 (ETEEEVQDTRL). Residues 1479–1481 (TRL) carry the PDZ-binding motif.

The protein belongs to the ABC transporter superfamily. ABCC family. CFTR transporter (TC 3.A.1.202) subfamily. In terms of assembly, monomer; does not require oligomerization for channel activity. May form oligomers in the membrane. Interacts with SLC26A3, SLC26A6 and NHERF1. Interacts with SHANK2. Interacts with MYO6. Interacts (via C-terminus) with GOPC (via PDZ domain); this promotes CFTR internalization and thereby decreases channel activity. Interacts with SLC4A7 through NHERF1. Found in a complex with MYO5B and RAB11A. Interacts with ANO1. Interacts with SLC26A8. Interacts with AHCYL1; the interaction increases CFTR activity. Interacts with CSE1L. The core-glycosylated form interacts with GORASP2 (via PDZ GRASP-type 1 domain) in respone to ER stress. Interacts with MARCHF2; the interaction leads to CFTR ubiqtuitination and degradation. Interacts with ADGRG2. N-glycosylated. Post-translationally, phosphorylated; cAMP treatment promotes phosphorylation and activates the channel. Dephosphorylation decreases the ATPase activity (in vitro). Phosphorylation at PKA sites activates the channel. Phosphorylation at PKC sites enhances the response to phosphorylation by PKA. Phosphorylated by AMPK; this inhibits channel activity. In terms of processing, ubiquitinated, leading to its degradation in the lysosome. Deubiquitination by USP10 in early endosomes enhances its endocytic recycling to the cell membrane. Ubiquitinated by RNF185 during ER stress. Ubiquitinated by MARCHF2.

The protein localises to the apical cell membrane. It localises to the early endosome membrane. Its subcellular location is the cell membrane. The protein resides in the recycling endosome membrane. It is found in the endoplasmic reticulum membrane. The protein localises to the nucleus. The catalysed reaction is ATP + H2O + closed Cl(-) channel = ADP + phosphate + open Cl(-) channel.. The enzyme catalyses chloride(in) = chloride(out). It catalyses the reaction hydrogencarbonate(in) = hydrogencarbonate(out). It carries out the reaction ATP + H2O = ADP + phosphate + H(+). Functionally, epithelial ion channel that plays an important role in the regulation of epithelial ion and water transport and fluid homeostasis. Mediates the transport of chloride ions across the cell membrane. Possesses an intrinsic ATPase activity and utilizes ATP to gate its channel; the passive flow of anions through the channel is gated by cycles of ATP binding and hydrolysis by the ATP-binding domains. The ion channel is also permeable to HCO(3)(-); selectivity depends on the extracellular chloride concentration. Exerts its function also by modulating the activity of other ion channels and transporters. Contributes to the regulation of the pH and the ion content of the epithelial fluid layer. Modulates the activity of the epithelial sodium channel (ENaC) complex, in part by regulating the cell surface expression of the ENaC complex. May regulate bicarbonate secretion and salvage in epithelial cells by regulating the transporter SLC4A7. Can inhibit the chloride channel activity of ANO1. Plays a role in the chloride and bicarbonate homeostasis during sperm epididymal maturation and capacitation. The protein is Cystic fibrosis transmembrane conductance regulator of Papio anubis (Olive baboon).